The sequence spans 264 residues: 3-deoxy-manno-octulosonate cytidylyltransferase (264 aa).

Belongs to the KdsB family.

The protein localises to the cytoplasm. The enzyme catalyses 3-deoxy-alpha-D-manno-oct-2-ulosonate + CTP = CMP-3-deoxy-beta-D-manno-octulosonate + diphosphate. The protein operates within nucleotide-sugar biosynthesis; CMP-3-deoxy-D-manno-octulosonate biosynthesis; CMP-3-deoxy-D-manno-octulosonate from 3-deoxy-D-manno-octulosonate and CTP: step 1/1. It participates in bacterial outer membrane biogenesis; lipopolysaccharide biosynthesis. Functionally, activates KDO (a required 8-carbon sugar) for incorporation into bacterial lipopolysaccharide in Gram-negative bacteria. This Marinomonas sp. (strain MWYL1) protein is 3-deoxy-manno-octulosonate cytidylyltransferase.